The following is a 366-amino-acid chain: Ribosomal RNA large subunit methyltransferase M (366 aa).

Residues Ser188, 221–224 (CPGG), Asp240, Asp260, and Asp277 contribute to the S-adenosyl-L-methionine site. Lys306 acts as the Proton acceptor in catalysis.

This sequence belongs to the class I-like SAM-binding methyltransferase superfamily. RNA methyltransferase RlmE family. RlmM subfamily. Monomer.

It is found in the cytoplasm. The catalysed reaction is cytidine(2498) in 23S rRNA + S-adenosyl-L-methionine = 2'-O-methylcytidine(2498) in 23S rRNA + S-adenosyl-L-homocysteine + H(+). Its function is as follows. Catalyzes the 2'-O-methylation at nucleotide C2498 in 23S rRNA. The sequence is that of Ribosomal RNA large subunit methyltransferase M from Dickeya chrysanthemi (strain Ech1591) (Dickeya zeae (strain Ech1591)).